The sequence spans 109 residues: MSQGIEFNRLMMDMKAMQMDAMSKPKSTSAVPEVAGSNFSDMLGQAINKVNDTQQASSQLANAFEIGKSGVDLTDVMIASQKASVSFQALTQVRNKLVQAYQDIMQMPV.

This sequence belongs to the FliE family.

It is found in the bacterial flagellum basal body. This Pseudomonas fluorescens (strain Pf0-1) protein is Flagellar hook-basal body complex protein FliE.